The primary structure comprises 345 residues: S-adenosylmethionine:tRNA ribosyltransferase-isomerase (345 aa).

This sequence belongs to the QueA family. As to quaternary structure, monomer.

It localises to the cytoplasm. The catalysed reaction is 7-aminomethyl-7-carbaguanosine(34) in tRNA + S-adenosyl-L-methionine = epoxyqueuosine(34) in tRNA + adenine + L-methionine + 2 H(+). It functions in the pathway tRNA modification; tRNA-queuosine biosynthesis. Transfers and isomerizes the ribose moiety from AdoMet to the 7-aminomethyl group of 7-deazaguanine (preQ1-tRNA) to give epoxyqueuosine (oQ-tRNA). The chain is S-adenosylmethionine:tRNA ribosyltransferase-isomerase from Shewanella sp. (strain ANA-3).